A 393-amino-acid polypeptide reads, in one-letter code: MTNQNLETNLETILNRALQGYDLSPAETLLLLSPTTKPNLGKLALTELPAEITAIQKTADQLRQQQVGDTVTYVINRNINFTNICEQHCSFCAFRRDDGKTGAFWLDINQILAKANDAVQRGATEICMQGGLNLQAKVAGKSLPYYLQLVREIKNEFSHLHLHAFSPQEVQFIAREDGVSYEYVIAALRDAGVHSMPGTAAEVLDDAVRRIICPEKIDTGTWLEIVGTAHRLGMPTTSTMLCGHIETPKQQILHLERLRSLQQTAIEKDYPARITEFILLPFVGQEAPAPLRRRVGHDQPILLDVLLLTAVSRIFLGNWIINHQPSWVKIGLDGAKEALKWGCNDIGGTLMEEHITTMAGAIGGTFMEVKNLQEAITSLGRNYQQRDTLYKYL.

Residues 71–318 (VTYVINRNIN…TAVSRIFLGN (248 aa)) form the Radical SAM core domain. Residues cysteine 85, cysteine 89, and cysteine 92 each contribute to the [4Fe-4S] cluster site.

It belongs to the radical SAM superfamily. CofH family. As to quaternary structure, consists of two subunits, CofG and CofH. It depends on [4Fe-4S] cluster as a cofactor.

The enzyme catalyses 5-amino-6-(D-ribitylamino)uracil + L-tyrosine + S-adenosyl-L-methionine = 5-amino-5-(4-hydroxybenzyl)-6-(D-ribitylimino)-5,6-dihydrouracil + 2-iminoacetate + 5'-deoxyadenosine + L-methionine + H(+). It functions in the pathway cofactor biosynthesis; coenzyme F0 biosynthesis. Catalyzes the radical-mediated synthesis of 5-amino-5-(4-hydroxybenzyl)-6-(D-ribitylimino)-5,6-dihydrouracil from 5-amino-6-(D-ribitylamino)uracil and L-tyrosine. This chain is 5-amino-6-(D-ribitylamino)uracil--L-tyrosine 4-hydroxyphenyl transferase, found in Trichodesmium erythraeum (strain IMS101).